The chain runs to 295 residues: Acetylglutamate kinase (295 aa).

Substrate-binding positions include 64 to 65 (GG), Arg86, and Asn190.

The protein belongs to the acetylglutamate kinase family. ArgB subfamily.

Its subcellular location is the cytoplasm. It catalyses the reaction N-acetyl-L-glutamate + ATP = N-acetyl-L-glutamyl 5-phosphate + ADP. It participates in amino-acid biosynthesis; L-arginine biosynthesis; N(2)-acetyl-L-ornithine from L-glutamate: step 2/4. Its function is as follows. Catalyzes the ATP-dependent phosphorylation of N-acetyl-L-glutamate. The polypeptide is Acetylglutamate kinase (Heliobacterium modesticaldum (strain ATCC 51547 / Ice1)).